The primary structure comprises 94 residues: Phormicin (94 aa).

Residues 1–23 form the signal peptide; that stretch reads MKFFMVFVVTFCLAVCFVSQSLA. A propeptide spanning residues 24–54 is cleaved from the precursor; that stretch reads IPADAANDAHFVDGVQALKEIEPELHGRYKR. Cystine bridges form between cysteine 57-cysteine 84, cysteine 70-cysteine 90, and cysteine 74-cysteine 92.

The protein belongs to the invertebrate defensin family. Type 1 subfamily.

The protein localises to the secreted. Functionally, responsible for the anti Gram-positive activity of immune hemolymph of P.terraenovae. This chain is Phormicin, found in Protophormia terraenovae (Northern blowfly).